Here is a 343-residue protein sequence, read N- to C-terminus: Heat-inducible transcription repressor HrcA (343 aa).

Belongs to the HrcA family.

Negative regulator of class I heat shock genes (grpE-dnaK-dnaJ and groELS operons). Prevents heat-shock induction of these operons. This Mycobacterium marinum (strain ATCC BAA-535 / M) protein is Heat-inducible transcription repressor HrcA.